The chain runs to 214 residues: Thymidylate kinase (214 aa).

12 to 19 (GGEGAGKS) is an ATP binding site.

The protein belongs to the thymidylate kinase family.

The enzyme catalyses dTMP + ATP = dTDP + ADP. Functionally, phosphorylation of dTMP to form dTDP in both de novo and salvage pathways of dTTP synthesis. This Gluconobacter oxydans (strain 621H) (Gluconobacter suboxydans) protein is Thymidylate kinase.